Consider the following 199-residue polypeptide: Recombination protein RecR (199 aa).

The segment at 57–72 adopts a C4-type zinc-finger fold; the sequence is CQQCRTFTEQNLCAIC. The region spanning 81-176 is the Toprim domain; it reads GMICVVEMPV…KVSRIAHGVP (96 aa).

This sequence belongs to the RecR family.

May play a role in DNA repair. It seems to be involved in an RecBC-independent recombinational process of DNA repair. It may act with RecF and RecO. This is Recombination protein RecR from Psychromonas ingrahamii (strain DSM 17664 / CCUG 51855 / 37).